The primary structure comprises 218 residues: Small ribosomal subunit protein uS3c (218 aa).

One can recognise a KH type-2 domain in the interval 47 to 118 (VQKNIRISSG…KLNIAITRIS (72 aa)).

This sequence belongs to the universal ribosomal protein uS3 family. In terms of assembly, part of the 30S ribosomal subunit.

It is found in the plastid. The protein localises to the chloroplast. The sequence is that of Small ribosomal subunit protein uS3c (rps3) from Nasturtium officinale (Watercress).